Consider the following 611-residue polypeptide: mRNA export factor GLE1 (611 aa).

2 disordered regions span residues serine 69–cysteine 94 and lysine 220–arginine 243. Residues aspartate 71 to aspartate 89 are compositionally biased toward acidic residues.

It belongs to the GLE1 family. In terms of assembly, part of the nuclear pore complex (NPC). The NPC has an eight-fold symmetrical structure comprising a central transport channel and two rings, the cytoplasmic and nuclear rings, to which eight filaments are attached. The cytoplasmic filaments have loose ends, while the nuclear filaments are joined in a distal ring, forming a nuclear basket. NPCs are highly dynamic in configuration and composition, and can be devided in 3 subcomplexes, the NUP62 subcomplex, the NUP107-160 subcomplex and the NUP93 subcomplex, containing approximately 30 different nucleoporin proteins.

The protein resides in the nucleus envelope. It is found in the nucleus. The protein localises to the nuclear pore complex. Required for seed viability. This Arabidopsis thaliana (Mouse-ear cress) protein is mRNA export factor GLE1.